Reading from the N-terminus, the 891-residue chain is Mating-type protein A-alpha Y1 (891 aa).

Positions 146–205 (SKKPRPKFHSEYTPLLELYFRFNAYPTYADRRVLAEKTGMLTRQITVWFQNHRRRAKGPL) form a DNA-binding region, homeobox. 5 disordered regions span residues 241-291 (PITL…PSTL), 319-339 (DIEMKDSSKPKRRKMKKLPKG), 393-437 (TRKP…RRVS), 610-718 (ARRK…EQSL), and 800-822 (MNWTASVGSNAQDPASQESGGDE). A compositionally biased stretch (polar residues) spans 244 to 257 (LGNNKTPDLTTSSR). Basic residues predominate over residues 328-337 (PKRRKMKKLP). A compositionally biased stretch (low complexity) spans 427–437 (ASSTVPSRRVS). A compositionally biased stretch (basic residues) spans 627-638 (KKDKKERKKAGL). 2 stretches are compositionally biased toward low complexity: residues 651-667 (VSSRASSLDSDVSTSAR) and 676-710 (QPSSSSRASSVASSGRTPSLSSTSSRRSSGMSMPS). Positions 800 to 818 (MNWTASVGSNAQDPASQES) are enriched in polar residues.

It localises to the nucleus. Functionally, specifies A-alpha-1 mating-type. May regulate the expression of genes specific to the homokaryotic cell type. The polypeptide is Mating-type protein A-alpha Y1 (Schizophyllum commune (Split gill fungus)).